Reading from the N-terminus, the 301-residue chain is Mitochondrial carnitine/acylcarnitine carrier protein (301 aa).

Position 2 is an N-acetylalanine (A2). Topologically, residues 2–12 are cytoplasmic; that stretch reads AEEPKPISPLK. 3 Solcar repeats span residues 8–99, 108–196, and 207–293; these read ISPL…GKRL, LTYP…LKNL, and LSVP…PMKI. A helical transmembrane segment spans residues 13 to 31; that stretch reads NLLAGGFGGVCLVFVGHPL. The Mitochondrial matrix portion of the chain corresponds to 32-73; it reads DTVKVRLQTQPPSLPGQPPMYSGTIDCFRKTLFREGITGLYR. The helical transmembrane segment at 74–93 threads the bilayer; sequence GMAAPIIGVTPMFAVCFFGF. At 94–112 the chain is on the cytoplasmic side; it reads GLGKRLQQKSPEDELTYPQ. The helical transmembrane segment at 113-131 threads the bilayer; that stretch reads LFTAGMLSGVFTTGIMTPG. The Mitochondrial matrix segment spans residues 132-170; the sequence is ERIKCLLQIQASSGKNKYSGTLDCAKKLYQEFGIRGFYK. N6-acetyllysine occurs at positions 148 and 157. K170 is modified (N6-acetyllysine; alternate). K170 carries the post-translational modification N6-succinyllysine; alternate. The helical transmembrane segment at 171-190 threads the bilayer; the sequence is GTALTLMRDVPASGMYFMTY. Residues 191–211 are Cytoplasmic-facing; that stretch reads EWLKNLFTPQGKSVHDLSVPR. Residues 212–230 traverse the membrane as a helical segment; sequence VLVAGGFRGIFNWVVAIPP. The Mitochondrial matrix segment spans residues 231 to 267; that stretch reads DVLKSRFQTAPPGKYPNGFRDVLRELIREEGVTSLYK. A helical membrane pass occupies residues 268-287; the sequence is GFNAVMIRAFPANAACFLGF. At 288–301 the chain is on the cytoplasmic side; sequence EIPMKILNWIAPNL.

This sequence belongs to the mitochondrial carrier (TC 2.A.29) family. Post-translationally, the N-terminus is blocked.

The protein resides in the mitochondrion inner membrane. It catalyses the reaction O-acetyl-(R)-carnitine(in) + (R)-carnitine(out) = O-acetyl-(R)-carnitine(out) + (R)-carnitine(in). The catalysed reaction is an O-acyl-(R)-carnitine(in) + (R)-carnitine(out) = an O-acyl-(R)-carnitine(out) + (R)-carnitine(in). The enzyme catalyses O-propanoyl-(R)-carnitine(in) + (R)-carnitine(out) = O-propanoyl-(R)-carnitine(out) + (R)-carnitine(in). It carries out the reaction O-hexadecanoyl-(R)-carnitine(in) + (R)-carnitine(out) = O-hexadecanoyl-(R)-carnitine(out) + (R)-carnitine(in). It catalyses the reaction O-octanoyl-(R)-carnitine(in) + (R)-carnitine(out) = O-octanoyl-(R)-carnitine(out) + (R)-carnitine(in). The catalysed reaction is (R)-carnitine(in) = (R)-carnitine(out). Its function is as follows. Mediates the electroneutral exchange of acylcarnitines (O-acyl-(R)-carnitine or L-acylcarnitine) of different acyl chain lengths (ranging from O-acetyl-(R)-carnitine to long-chain O-acyl-(R)-carnitines) with free carnitine ((R)-carnitine or L-carnitine) across the mitochondrial inner membrane, via a ping-pong mechanism. Key player in the mitochondrial oxidation pathway, it translocates the fatty acids in the form of acylcarnitines into the mitochondrial matrix, where the carnitine palmitoyltransferase 2 (CPT-2) activates them to undergo fatty acid beta-oxidation. Catalyzes the unidirectional transport (uniport) of carnitine at lower rates than the antiport (exchange). The chain is Mitochondrial carnitine/acylcarnitine carrier protein from Rattus norvegicus (Rat).